The following is a 337-amino-acid chain: uncharacterized protein (337 aa).

One can recognise an F-box domain in the interval 12-60 (SLNYVDLPDTVHRKIFEYLNPWEIFKLSRISKAIHVTILKNKKFAVKDI).

This is an uncharacterized protein from Caenorhabditis elegans.